Consider the following 459-residue polypeptide: Trigger factor (459 aa).

The PPIase FKBP-type domain occupies 161–246 (GDKVVIDFQG…IKKIMEGKLP (86 aa)).

The protein belongs to the FKBP-type PPIase family. Tig subfamily.

The protein localises to the cytoplasm. The enzyme catalyses [protein]-peptidylproline (omega=180) = [protein]-peptidylproline (omega=0). Its function is as follows. Involved in protein export. Acts as a chaperone by maintaining the newly synthesized protein in an open conformation. Functions as a peptidyl-prolyl cis-trans isomerase. The polypeptide is Trigger factor (Legionella pneumophila (strain Corby)).